The chain runs to 991 residues: Transcription factor ROB1 (991 aa).

Positions 17–43 (CTVCRTIKRKCDGNTPCSNCLKRNQEC) form a DNA-binding region, zn(2)-C6 fungal-type. Disordered regions lie at residues 150–188 (LNQQQQQQQPSPQSLSQSSASEVSTRSSPASPNSTISLA), 792–875 (FYAQ…EDNP), and 901–959 (QEEG…PQLP). Over residues 152-168 (QQQQQQQPSPQSLSQSS) the composition is skewed to low complexity. Polar residues predominate over residues 169–187 (ASEVSTRSSPASPNSTISL). A compositionally biased stretch (low complexity) spans 795–806 (QQQQQQQQQQQQ). Basic and acidic residues-rich tracts occupy residues 807 to 817 (PKHEYHDHQQE) and 825 to 855 (QEEHSEKDIKIEIKDEPQPQEEHIHQDYPMK). The span at 907-931 (QQQQQQQQEQVQQEQVQQEQVQQDQ) shows a compositional bias: low complexity.

It is found in the nucleus. Transcription factor that mediates conventional biofilm formation and plays a key role in microcolony formation under both flow and static conditions and to epithelial surfaces. Modulates infection of mammalian hosts. In Candida albicans (strain SC5314 / ATCC MYA-2876) (Yeast), this protein is Transcription factor ROB1.